The primary structure comprises 372 residues: Lung adenoma susceptibility protein 2 (372 aa).

Residues 1–31 (MAKSKTKHRLCSQESSVSALLASCTLSGSNS) form the signal peptide. At Ser-161 the chain carries Phosphoserine. The interval 248–268 (KSPVPVNSDDSPQQTSRAKSA) is disordered. A compositionally biased stretch (polar residues) spans 255 to 265 (SDDSPQQTSRA).

The protein localises to the secreted. Its function is as follows. Might play a role in cell proliferation. This chain is Lung adenoma susceptibility protein 2 (LAS2), found in Homo sapiens (Human).